Consider the following 377-residue polypeptide: 23S rRNA (uracil(747)-C(5))-methyltransferase RlmC (377 aa).

[4Fe-4S] cluster is bound by residues Cys-3, Cys-11, Cys-14, and Cys-87. S-adenosyl-L-methionine-binding residues include Gln-212, Phe-241, Glu-262, and Asn-307. Cys-334 (nucleophile) is an active-site residue.

It belongs to the class I-like SAM-binding methyltransferase superfamily. RNA M5U methyltransferase family. RlmC subfamily.

The enzyme catalyses uridine(747) in 23S rRNA + S-adenosyl-L-methionine = 5-methyluridine(747) in 23S rRNA + S-adenosyl-L-homocysteine + H(+). Functionally, catalyzes the formation of 5-methyl-uridine at position 747 (m5U747) in 23S rRNA. The chain is 23S rRNA (uracil(747)-C(5))-methyltransferase RlmC from Xenorhabdus bovienii (strain SS-2004) (Xenorhabdus nematophila subsp. bovienii).